The chain runs to 131 residues: ER membrane protein complex subunit 5 (131 aa).

Residues 1–3 (MAP) lie on the Cytoplasmic side of the membrane. A helical transmembrane segment spans residues 4 to 22 (SLWKGLVGIGLFALAHAAL). Residues 23–43 (SAAQHRSYMRLTEKEDESLPI) lie on the Lumenal side of the membrane. A helical transmembrane segment spans residues 44-63 (DIVLQTLLAFAVTCYGIVHI). Topologically, residues 64–131 (AGEFKDMDAT…KLRKLESLRR (68 aa)) are cytoplasmic. Residue serine 120 is modified to Phosphoserine.

Belongs to the membrane magnesium transporter (TC 1.A.67) family. In terms of assembly, component of the ER membrane protein complex (EMC).

The protein localises to the endoplasmic reticulum membrane. Its subcellular location is the golgi apparatus membrane. It is found in the early endosome membrane. Part of the endoplasmic reticulum membrane protein complex (EMC) that enables the energy-independent insertion into endoplasmic reticulum membranes of newly synthesized membrane proteins. Preferentially accommodates proteins with transmembrane domains that are weakly hydrophobic or contain destabilizing features such as charged and aromatic residues. Involved in the cotranslational insertion of multi-pass membrane proteins in which stop-transfer membrane-anchor sequences become ER membrane spanning helices. It is also required for the post-translational insertion of tail-anchored/TA proteins in endoplasmic reticulum membranes. By mediating the proper cotranslational insertion of N-terminal transmembrane domains in an N-exo topology, with translocated N-terminus in the lumen of the ER, controls the topology of multi-pass membrane proteins like the G protein-coupled receptors. By regulating the insertion of various proteins in membranes, it is indirectly involved in many cellular processes. May be involved in Mg(2+) transport. This chain is ER membrane protein complex subunit 5, found in Pongo abelii (Sumatran orangutan).